We begin with the raw amino-acid sequence, 932 residues long: Valine--tRNA ligase (932 aa).

The 'HIGH' region motif lies at 75–85 (PNVTGQLHMGH). Positions 568 to 572 (KMSKS) match the 'KMSKS' region motif. Lys-571 is a binding site for ATP. The stretch at 863-929 (TVDVAAERKR…ERITARLEGL (67 aa)) forms a coiled coil.

It belongs to the class-I aminoacyl-tRNA synthetase family. ValS type 1 subfamily. Monomer.

It is found in the cytoplasm. It catalyses the reaction tRNA(Val) + L-valine + ATP = L-valyl-tRNA(Val) + AMP + diphosphate. Functionally, catalyzes the attachment of valine to tRNA(Val). As ValRS can inadvertently accommodate and process structurally similar amino acids such as threonine, to avoid such errors, it has a 'posttransfer' editing activity that hydrolyzes mischarged Thr-tRNA(Val) in a tRNA-dependent manner. This chain is Valine--tRNA ligase, found in Corynebacterium jeikeium (strain K411).